The following is a 73-amino-acid chain: Translation initiation factor IF-1 (73 aa).

The 73-residue stretch at 1-73 (MPKKDGVIEI…SRGRIVYRYK (73 aa)) folds into the S1-like domain.

It belongs to the IF-1 family. Component of the 30S ribosomal translation pre-initiation complex which assembles on the 30S ribosome in the order IF-2 and IF-3, IF-1 and N-formylmethionyl-tRNA(fMet); mRNA recruitment can occur at any time during PIC assembly.

The protein localises to the cytoplasm. In terms of biological role, one of the essential components for the initiation of protein synthesis. Stabilizes the binding of IF-2 and IF-3 on the 30S subunit to which N-formylmethionyl-tRNA(fMet) subsequently binds. Helps modulate mRNA selection, yielding the 30S pre-initiation complex (PIC). Upon addition of the 50S ribosomal subunit IF-1, IF-2 and IF-3 are released leaving the mature 70S translation initiation complex. This is Translation initiation factor IF-1 from Kineococcus radiotolerans (strain ATCC BAA-149 / DSM 14245 / SRS30216).